We begin with the raw amino-acid sequence, 21 residues long: Fibrinogen beta chain (21 aa).

Gln-1 is modified (pyrrolidone carboxylic acid). Tyr-6 carries the post-translational modification Sulfotyrosine.

Heterohexamer; disulfide linked. Contains 2 sets of 3 non-identical chains (alpha, beta and gamma). The 2 heterotrimers are in head to head conformation with the N-termini in a small central domain. Post-translationally, conversion of fibrinogen to fibrin is triggered by thrombin, which cleaves fibrinopeptides A and B from alpha and beta chains, and thus exposes the N-terminal polymerization sites responsible for the formation of the soft clot.

It is found in the secreted. Cleaved by the protease thrombin to yield monomers which, together with fibrinogen alpha (FGA) and fibrinogen gamma (FGG), polymerize to form an insoluble fibrin matrix. Fibrin has a major function in hemostasis as one of the primary components of blood clots. In addition, functions during the early stages of wound repair to stabilize the lesion and guide cell migration during re-epithelialization. Was originally thought to be essential for platelet aggregation, based on in vitro studies using anticoagulated blood. However subsequent studies have shown that it is not absolutely required for thrombus formation in vivo. Enhances expression of SELP in activated platelets. Maternal fibrinogen is essential for successful pregnancy. Fibrin deposition is also associated with infection, where it protects against IFNG-mediated hemorrhage. May also facilitate the antibacterial immune response via both innate and T-cell mediated pathways. The protein is Fibrinogen beta chain (FGB) of Odocoileus hemionus (Mule deer).